Here is a 426-residue protein sequence, read N- to C-terminus: Enolase (426 aa).

Gln163 provides a ligand contact to (2R)-2-phosphoglycerate. Residue Glu205 is the Proton donor of the active site. 3 residues coordinate Mg(2+): Asp242, Glu285, and Asp312. Positions 337, 366, 367, and 388 each coordinate (2R)-2-phosphoglycerate. Lys337 functions as the Proton acceptor in the catalytic mechanism.

Belongs to the enolase family. Mg(2+) serves as cofactor.

It is found in the cytoplasm. The protein resides in the secreted. Its subcellular location is the cell surface. The catalysed reaction is (2R)-2-phosphoglycerate = phosphoenolpyruvate + H2O. It functions in the pathway carbohydrate degradation; glycolysis; pyruvate from D-glyceraldehyde 3-phosphate: step 4/5. In terms of biological role, catalyzes the reversible conversion of 2-phosphoglycerate (2-PG) into phosphoenolpyruvate (PEP). It is essential for the degradation of carbohydrates via glycolysis. The polypeptide is Enolase (Gluconobacter oxydans (strain 621H) (Gluconobacter suboxydans)).